Consider the following 208-residue polypeptide: Golgi apparatus membrane protein TVP23 homolog B (208 aa).

M1 carries the post-translational modification N-acetylmethionine. Acidic residues predominate over residues 1–21 (MLQQDSNDDTEDVSLFDAEEE). The interval 1 to 27 (MLQQDSNDDTEDVSLFDAEEETTNRPK) is disordered. A run of 4 helical transmembrane segments spans residues 34 to 53 (PVASFFHLFFRVSAIIVYLL), 54 to 72 (CELFSSSFIACMVTIILLL), 126 to 146 (IFWLGLVACPVLWVVFAFSAL), and 152 to 172 (KWLAVVIMGVVLQGANLYGYI).

This sequence belongs to the TVP23 family.

It is found in the membrane. The chain is Golgi apparatus membrane protein TVP23 homolog B (TVP23B) from Bos taurus (Bovine).